The primary structure comprises 367 residues: Ribosomal lysine N-methyltransferase 5 (367 aa).

A disordered region spans residues 55–74 (EGGRKKKRVRRRNKASSVEE). The segment covering 58–68 (RKKKRVRRRNK) has biased composition (basic residues). Residues Trp110, 170–172 (GAG), Asp192, Trp256, and Met288 each bind S-adenosyl-L-methionine.

It belongs to the class I-like SAM-binding methyltransferase superfamily. RKM5 family.

Its function is as follows. S-adenosyl-L-methionine-dependent protein-lysine N-methyltransferase that monomethylates 60S ribosomal protein L1 (RPL1A and RPL1B) at 'Lys-46'. The polypeptide is Ribosomal lysine N-methyltransferase 5 (RKM5) (Saccharomyces cerevisiae (strain VIN 13) (Baker's yeast)).